A 164-amino-acid polypeptide reads, in one-letter code: Glycine cleavage system H protein, mitochondrial (164 aa).

A mitochondrion-targeting transit peptide spans methionine 1–phenylalanine 34. Residues valine 56–lysine 138 enclose the Lipoyl-binding domain. The residue at position 97 (lysine 97) is an N6-lipoyllysine.

The protein belongs to the GcvH family. In terms of assembly, the glycine cleavage system is composed of four proteins: P, T, L and H. (R)-lipoate serves as cofactor.

It localises to the mitochondrion. Functionally, the glycine cleavage system catalyzes the degradation of glycine. The H protein shuttles the methylamine group of glycine from the P protein to the T protein. In Oryza sativa subsp. indica (Rice), this protein is Glycine cleavage system H protein, mitochondrial (GDCSH).